We begin with the raw amino-acid sequence, 688 residues long: Zinc finger protein 770 (688 aa).

Residue Lys-11 forms a Glycyl lysine isopeptide (Lys-Gly) (interchain with G-Cter in SUMO2) linkage. 3 consecutive C2H2-type zinc fingers follow at residues 27 to 49 (YVCNICFKHFETPSKLARHYLIH), 55 to 77 (FECDVCHKTFRQLVHLERHQLTH), and 81 to 103 (FKCSICQRHFKNLKTFVKHQQLH). Glycyl lysine isopeptide (Lys-Gly) (interchain with G-Cter in SUMO2) cross-links involve residues Lys-112, Lys-121, and Lys-146. 3 consecutive C2H2-type zinc fingers follow at residues 160 to 182 (HACTICGKMFPSQSKLDRHVLIH), 188 to 210 (FKCVLCTKSFRQSTHLKIHQLTH), and 216 to 238 (FQCCFCQKGFKIQSKLLKHKQIH). Lys-262 is covalently cross-linked (Glycyl lysine isopeptide (Lys-Gly) (interchain with G-Cter in SUMO2)). A C2H2-type 7; degenerate zinc finger spans residues 294–318 (FQCPKCEKCFESEQILNEHSCFPAR). Residues Lys-420 and Lys-437 each participate in a glycyl lysine isopeptide (Lys-Gly) (interchain with G-Cter in SUMO2) cross-link. C2H2-type zinc fingers lie at residues 475 to 497 (CPCDKCEKVFPSISKLKRHYLIH), 503 to 525 (FGCNICGKSFRQSAHLKRHEQTH), 623 to 645 (YRCSVCAKSFRSPSKLERHYLIH), and 651 to 673 (FECSVCGKTFRQAPHWKRHQLTH). Lys-681 is covalently cross-linked (Glycyl lysine isopeptide (Lys-Gly) (interchain with G-Cter in SUMO2)).

Belongs to the krueppel C2H2-type zinc-finger protein family.

The protein resides in the nucleus. In terms of biological role, may be involved in transcriptional regulation. This chain is Zinc finger protein 770 (ZNF770), found in Pongo abelii (Sumatran orangutan).